The sequence spans 269 residues: Hemin import ATP-binding protein HmuV (269 aa).

An ABC transporter domain is found at 5–242 (IETHSVTMRI…GLIRKVFEVC (238 aa)). Residue 37 to 44 (GPNGAGKS) participates in ATP binding.

It belongs to the ABC transporter superfamily. Heme (hemin) importer (TC 3.A.1.14.5) family. The complex is composed of two ATP-binding proteins (HmuV), two transmembrane proteins (HmuU) and a solute-binding protein (HmuT).

Its subcellular location is the cell inner membrane. In terms of biological role, part of the ABC transporter complex HmuTUV involved in hemin import. Responsible for energy coupling to the transport system. The chain is Hemin import ATP-binding protein HmuV from Nitrobacter winogradskyi (strain ATCC 25391 / DSM 10237 / CIP 104748 / NCIMB 11846 / Nb-255).